A 338-amino-acid chain; its full sequence is N-acetyl-gamma-glutamyl-phosphate reductase (338 aa).

Residue Cys148 is part of the active site.

It belongs to the NAGSA dehydrogenase family. Type 1 subfamily.

The protein resides in the cytoplasm. The enzyme catalyses N-acetyl-L-glutamate 5-semialdehyde + phosphate + NADP(+) = N-acetyl-L-glutamyl 5-phosphate + NADPH + H(+). It functions in the pathway amino-acid biosynthesis; L-arginine biosynthesis; N(2)-acetyl-L-ornithine from L-glutamate: step 3/4. Functionally, catalyzes the NADPH-dependent reduction of N-acetyl-5-glutamyl phosphate to yield N-acetyl-L-glutamate 5-semialdehyde. The protein is N-acetyl-gamma-glutamyl-phosphate reductase of Leptospira borgpetersenii serovar Hardjo-bovis (strain JB197).